The primary structure comprises 539 residues: Phosphoenolpyruvate carboxykinase (ATP) (539 aa).

Substrate contacts are provided by arginine 64, tyrosine 206, and lysine 212. ATP is bound by residues lysine 212, histidine 231, and 247 to 255 (GLSGTGKTT). Residues lysine 212 and histidine 231 each coordinate Mn(2+). Aspartate 268 lines the Mn(2+) pocket. ATP is bound by residues glutamate 296, arginine 332, 448-449 (RI), and threonine 454. Arginine 332 provides a ligand contact to substrate.

This sequence belongs to the phosphoenolpyruvate carboxykinase (ATP) family. In terms of assembly, monomer. It depends on Mn(2+) as a cofactor.

It is found in the cytoplasm. The enzyme catalyses oxaloacetate + ATP = phosphoenolpyruvate + ADP + CO2. It functions in the pathway carbohydrate biosynthesis; gluconeogenesis. Involved in the gluconeogenesis. Catalyzes the conversion of oxaloacetate (OAA) to phosphoenolpyruvate (PEP) through direct phosphoryl transfer between the nucleoside triphosphate and OAA. The polypeptide is Phosphoenolpyruvate carboxykinase (ATP) (Salmonella arizonae (strain ATCC BAA-731 / CDC346-86 / RSK2980)).